A 135-amino-acid polypeptide reads, in one-letter code: Phosphoinositide-interacting protein (135 aa).

Positions 1–21 are disordered; sequence MEVLPKALEVDERSPESKDLL. Positions 8-19 are enriched in basic and acidic residues; the sequence is LEVDERSPESKD. Transmembrane regions (helical) follow at residues 54–74 and 92–112; these read IIIM…TCVA and PAFL…VPII.

Interacts with TRPV1. In terms of tissue distribution, strongly expressed in most dorsal root ganglia (DRG) and trigeminal neurons. Expressed by most peptidergic (CGRP+) and non-peptidergic (IB4+) DRG neurons. Weakly expressed in other parts of the peripheral nervous system (PNS) including sympathetic and enteric neurons. Not expressed in the spinal cord.

Its subcellular location is the membrane. In terms of biological role, regulatory subunit of TRPV1, a molecular sensor of noxious heat and capsaicin. Positively regulates TRPV1 channel activity via phosphatidylinositol 4,5-bisphosphate (PIP2). Binds various phosphoinositide, including phosphatidylinositol 4,5-bisphosphate (PIP2), but not phosphatidylinositol (PI). The protein is Phosphoinositide-interacting protein (Pirt) of Mus musculus (Mouse).